Consider the following 201-residue polypeptide: Small ribosomal subunit protein uS4c (201 aa).

An S4 RNA-binding domain is found at 89–152 (MRLDNILFRL…NSRTLVQNLL (64 aa)).

This sequence belongs to the universal ribosomal protein uS4 family. Part of the 30S ribosomal subunit. Contacts protein S5. The interaction surface between S4 and S5 is involved in control of translational fidelity.

The protein resides in the plastid. Its subcellular location is the chloroplast. One of the primary rRNA binding proteins, it binds directly to 16S rRNA where it nucleates assembly of the body of the 30S subunit. Functionally, with S5 and S12 plays an important role in translational accuracy. The chain is Small ribosomal subunit protein uS4c (rps4) from Arabidopsis thaliana (Mouse-ear cress).